The sequence spans 74 residues: Protein translocase subunit SecE (74 aa).

At 1–36 (MKTDFNQKIEQLKEFIEECRRVWLVLKKPTKDEYLA) the chain is on the cytoplasmic side. A helical transmembrane segment spans residues 37–62 (VAKVTALGISLLGIIGYIIHVPATYI). At 63–74 (KGILKPPTTPRV) the chain is on the extracellular side.

This sequence belongs to the SecE/SEC61-gamma family. In terms of assembly, component of the Sec protein translocase complex. Heterotrimer consisting of alpha (SecY), beta (SecG) and gamma (SecE) subunits. The heterotrimers can form oligomers, although 1 heterotrimer is thought to be able to translocate proteins. Interacts with the ribosome. May interact with SecDF, and other proteins may be involved.

Its subcellular location is the cell membrane. In terms of biological role, essential subunit of the protein translocation channel SecYEG. Clamps together the 2 halves of SecY. May contact the channel plug during translocation. The sequence is that of Protein translocase subunit SecE from Methanocaldococcus jannaschii (strain ATCC 43067 / DSM 2661 / JAL-1 / JCM 10045 / NBRC 100440) (Methanococcus jannaschii).